The sequence spans 883 residues: Putative pentatricopeptide repeat-containing protein At1g13800 (883 aa).

PPR repeat units follow at residues 145–180 (LIRV…GRAP), 181–215 (DIKA…GLDA), 216–251 (DAHT…TRNP), 253–285 (VFYL…NILV), 290–324 (LGIA…GIDP), 325–359 (DVYV…RKRI), 360–394 (NCVI…NISL), 395–429 (DRVC…GIAP), 430–464 (DVIN…GKTP), 465–499 (DIVI…GVKP), 500–534 (TYVT…SREN), 537–561 (SMVK…LEFP), 563–598 (PKSV…GVEP), 599–633 (EKSM…KIVP), 634–668 (DLFT…DVKP), 697–731 (DVVY…EIVP), 760–794 (DVFY…GVDP), 795–829 (DAAP…GVKP), and 830–864 (DVVP…GIKP).

The protein belongs to the PPR family. P subfamily.

The polypeptide is Putative pentatricopeptide repeat-containing protein At1g13800 (Arabidopsis thaliana (Mouse-ear cress)).